The following is a 311-amino-acid chain: Methionyl-tRNA formyltransferase (311 aa).

Residue 108-111 (SILP) coordinates (6S)-5,6,7,8-tetrahydrofolate.

This sequence belongs to the Fmt family.

It catalyses the reaction L-methionyl-tRNA(fMet) + (6R)-10-formyltetrahydrofolate = N-formyl-L-methionyl-tRNA(fMet) + (6S)-5,6,7,8-tetrahydrofolate + H(+). Functionally, attaches a formyl group to the free amino group of methionyl-tRNA(fMet). The formyl group appears to play a dual role in the initiator identity of N-formylmethionyl-tRNA by promoting its recognition by IF2 and preventing the misappropriation of this tRNA by the elongation apparatus. This is Methionyl-tRNA formyltransferase from Sorangium cellulosum (strain So ce56) (Polyangium cellulosum (strain So ce56)).